The sequence spans 470 residues: Probable citrate synthase, mitochondrial (470 aa).

Residues H297, H351, and D406 contribute to the active site.

The protein belongs to the citrate synthase family. As to quaternary structure, homodimer.

Its subcellular location is the mitochondrion matrix. It carries out the reaction oxaloacetate + acetyl-CoA + H2O = citrate + CoA + H(+). Its pathway is carbohydrate metabolism; tricarboxylic acid cycle; isocitrate from oxaloacetate: step 1/2. This is Probable citrate synthase, mitochondrial from Leishmania major.